The following is a 90-amino-acid chain: MARTVQCIKLGKEAEGLDFPPYPGELGQRIWANVSKQAWAGWLKHQTMLVNENRLNLADARARQYLARQMENHFFGSGADAAAGYVPPSA.

It belongs to the Fe(2+)-trafficking protein family.

Could be a mediator in iron transactions between iron acquisition and iron-requiring processes, such as synthesis and/or repair of Fe-S clusters in biosynthetic enzymes. This chain is Probable Fe(2+)-trafficking protein, found in Verminephrobacter eiseniae (strain EF01-2).